The sequence spans 77 residues: Conotoxin Lt7.1 (77 aa).

Positions 1-19 (MEKLTILLLVAALLMSTQG) are cleaved as a signal peptide. Residues 20–49 (LIQSGGENRPKEKIKFLSKRKTVAESWWEG) constitute a propeptide that is removed on maturation. 3 disulfide bridges follow: C51–C65, C58–C69, and C64–C74.

Belongs to the conotoxin O2 superfamily. Expressed by the venom duct.

The protein resides in the secreted. This Conus litteratus (Lettered cone) protein is Conotoxin Lt7.1.